We begin with the raw amino-acid sequence, 500 residues long: NAD(P)H-quinone oxidoreductase chain 4, chloroplastic (500 aa).

14 consecutive transmembrane segments (helical) span residues 4 to 24 (FPWLTIIVVFPILTGSLIFLL), 37 to 57 (LCICILELLLTTYTFCYHFQL), 87 to 107 (IGPILLTGFITTLATLAAWPV), 111 to 131 (AQLFHFLMLAMYSGQIGSFSS), 134 to 154 (LLLFFLMWEFELIPVYLLLSM), 167 to 187 (FILYTAGGSIFLLIGVLGIGL), 208 to 228 (ALEVIFYVGFLIAFAVKLPII), 242 to 262 (HYSTCMLLAGILLKMGAYGLV), 272 to 292 (AHCLFSPGLIIVGAIQIIYAA), 305 to 325 (IAYSSISHMGFIIIGIGSLSD), 330 to 350 (GAILQIISHGFIGAALFFLAG), 386 to 406 (LALPGLSGFVAELLVFFGIIT), 416 to 436 (ILIAFLMAIGMILTPIYSLSM), and 462 to 482 (LFVSISLLLPIIGIGIYPDFV).

It belongs to the complex I subunit 4 family.

The protein resides in the plastid. It is found in the chloroplast thylakoid membrane. The enzyme catalyses a plastoquinone + NADH + (n+1) H(+)(in) = a plastoquinol + NAD(+) + n H(+)(out). It carries out the reaction a plastoquinone + NADPH + (n+1) H(+)(in) = a plastoquinol + NADP(+) + n H(+)(out). This Oenothera parviflora (Small-flowered evening primrose) protein is NAD(P)H-quinone oxidoreductase chain 4, chloroplastic.